The sequence spans 572 residues: Sulfate adenylyltransferase (572 aa).

The interval 1–169 is N-terminal; sequence MANTPHGGVL…IQAINKLNHY (169 aa). Residues 170–394 are catalytic; it reads DYVGLRYTPA…LRESHPPRAK (225 aa). Residue glutamine 197 participates in sulfate binding. ATP is bound by residues 197-200 and 291-294; these read QTRN and GRDH. Catalysis depends on residues threonine 198, arginine 199, and asparagine 200. Arginine 199 is a binding site for sulfate. Alanine 295 is a sulfate binding site. ATP is bound at residue methionine 333. An allosteric regulation domain; adenylyl-sulfate kinase-like region spans residues 395 to 572; the sequence is QGFTIFLTGH…LLESQGFFGN (178 aa). Residues 434–437, arginine 451, 477–478, and lysine 515 contribute to the 3'-phosphoadenylyl sulfate site; these read ETVR and IA.

This sequence in the N-terminal section; belongs to the sulfate adenylyltransferase family. The protein in the C-terminal section; belongs to the APS kinase family. As to quaternary structure, homohexamer. Dimer of trimers.

Its subcellular location is the cytoplasm. The catalysed reaction is sulfate + ATP + H(+) = adenosine 5'-phosphosulfate + diphosphate. It functions in the pathway sulfur metabolism; hydrogen sulfide biosynthesis; sulfite from sulfate: step 1/3. Its activity is regulated as follows. Allosterically inhibited by 3'-phosphoadenosine 5'-phosphosulfate (PAPS). In terms of biological role, catalyzes the first intracellular reaction of sulfate assimilation, forming adenosine-5'-phosphosulfate (APS) from inorganic sulfate and ATP. Plays an important role in sulfate activation as a component of the biosynthesis pathway of sulfur-containing amino acids. In Yarrowia lipolytica (strain CLIB 122 / E 150) (Yeast), this protein is Sulfate adenylyltransferase.